Here is a 266-residue protein sequence, read N- to C-terminus: Ribosomal RNA small subunit methyltransferase A (266 aa).

N16, L18, G43, E64, D89, and N110 together coordinate S-adenosyl-L-methionine.

Belongs to the class I-like SAM-binding methyltransferase superfamily. rRNA adenine N(6)-methyltransferase family. RsmA subfamily.

It is found in the cytoplasm. It catalyses the reaction adenosine(1518)/adenosine(1519) in 16S rRNA + 4 S-adenosyl-L-methionine = N(6)-dimethyladenosine(1518)/N(6)-dimethyladenosine(1519) in 16S rRNA + 4 S-adenosyl-L-homocysteine + 4 H(+). In terms of biological role, specifically dimethylates two adjacent adenosines (A1518 and A1519) in the loop of a conserved hairpin near the 3'-end of 16S rRNA in the 30S particle. May play a critical role in biogenesis of 30S subunits. The chain is Ribosomal RNA small subunit methyltransferase A from Marinomonas sp. (strain MWYL1).